We begin with the raw amino-acid sequence, 304 residues long: Acetyl-coenzyme A carboxylase carboxyl transferase subunit beta (304 aa).

Residues 25 to 294 (LWIKCPETGE…EAARRESGSQ (270 aa)) enclose the CoA carboxyltransferase N-terminal domain.

Belongs to the AccD/PCCB family. In terms of assembly, acetyl-CoA carboxylase is a heterohexamer composed of biotin carboxyl carrier protein (AccB), biotin carboxylase (AccC) and two subunits each of ACCase subunit alpha (AccA) and ACCase subunit beta (AccD).

The protein localises to the cytoplasm. The catalysed reaction is N(6)-carboxybiotinyl-L-lysyl-[protein] + acetyl-CoA = N(6)-biotinyl-L-lysyl-[protein] + malonyl-CoA. Its pathway is lipid metabolism; malonyl-CoA biosynthesis; malonyl-CoA from acetyl-CoA: step 1/1. Component of the acetyl coenzyme A carboxylase (ACC) complex. Biotin carboxylase (BC) catalyzes the carboxylation of biotin on its carrier protein (BCCP) and then the CO(2) group is transferred by the transcarboxylase to acetyl-CoA to form malonyl-CoA. The protein is Acetyl-coenzyme A carboxylase carboxyl transferase subunit beta of Sinorhizobium fredii (strain NBRC 101917 / NGR234).